A 192-amino-acid chain; its full sequence is T-cell surface glycoprotein CD3 epsilon chain (192 aa).

A signal peptide spans 1 to 21 (MQSGNLWRALGLCLLLVGAWA). Residues 23-114 (DADEQKPYEV…QNCMEVNLME (92 aa)) lie on the Extracellular side of the membrane. The Ig-like domain occupies 26 to 97 (EQKPYEVSIS…EGNKEAAHTL (72 aa)). Cysteines 43 and 84 form a disulfide. Asn72 carries an N-linked (GlcNAc...) asparagine glycan. A helical transmembrane segment spans residues 115 to 135 (VATIIVVDICVTLGLLLLVYY). Topologically, residues 136–192 (WSKSRKAKASPMTRGAGAGGRPRGQNKGRPPPVPNPDYEPIRKGQRDLYAGLNQRGV) are cytoplasmic. Residues 145 to 180 (SPMTRGAGAGGRPRGQNKGRPPPVPNPDYEPIRKGQ) are disordered. Residues 160-177 (QNKGRPPPVPNPDYEPIR) form an NUMB-binding region region. Residues 163–190 (GRPPPVPNPDYEPIRKGQRDLYAGLNQR) enclose the ITAM domain. A proline-rich sequence region spans residues 164 to 171 (RPPPVPNP). 2 positions are modified to phosphotyrosine: Tyr173 and Tyr184.

As to quaternary structure, the TCR-CD3 complex is composed of a CD3D/CD3E and a CD3G/CD3E heterodimers that preferentially associate with TCRalpha and TCRbeta, respectively, to form TCRalpha/CD3E/CD3G and TCRbeta/CD3G/CD3E trimers. In turn, the hexamer interacts with CD3Z homodimer to form the TCR-CD3 complex. Alternatively, TCRalpha and TCRbeta can be replaced by TCRgamma and TCRdelta. Interacts with CD6. Interacts (via Proline-rich sequence) with NCK1; the interaction is ligand dependent but independent of tyrosine kinase activation. Post-translationally, phosphorylated on Tyr residues after T-cell receptor triggering by LCK in association with CD4/CD8.

It is found in the cell membrane. Functionally, part of the TCR-CD3 complex present on T-lymphocyte cell surface that plays an essential role in adaptive immune response. When antigen presenting cells (APCs) activate T-cell receptor (TCR), TCR-mediated signals are transmitted across the cell membrane by the CD3 chains CD3D, CD3E, CD3G and CD3Z. All CD3 chains contain immunoreceptor tyrosine-based activation motifs (ITAMs) in their cytoplasmic domain. Upon TCR engagement, these motifs become phosphorylated by Src family protein tyrosine kinases LCK and FYN, resulting in the activation of downstream signaling pathways. In addition of this role of signal transduction in T-cell activation, CD3E plays an essential role in correct T-cell development. Also participates in internalization and cell surface down-regulation of TCR-CD3 complexes via endocytosis sequences present in CD3E cytosolic region. In addition to its role as a TCR coreceptor, it serves as a receptor for ITPRIPL1. Ligand recognition inhibits T-cell activation by promoting interaction with NCK1, which prevents CD3E-ZAP70 interaction and blocks the ERK-NFkB signaling cascade and calcium influx. In Bos taurus (Bovine), this protein is T-cell surface glycoprotein CD3 epsilon chain (CD3E).